The chain runs to 133 residues: NADPH-dependent 7-cyano-7-deazaguanine reductase (133 aa).

Residue cysteine 49 is the Thioimide intermediate of the active site. The Proton donor role is filled by aspartate 56. Residues 71-73 (IEL) and 90-91 (HE) each bind substrate.

This sequence belongs to the GTP cyclohydrolase I family. QueF type 1 subfamily.

It is found in the cytoplasm. The enzyme catalyses 7-aminomethyl-7-carbaguanine + 2 NADP(+) = 7-cyano-7-deazaguanine + 2 NADPH + 3 H(+). It functions in the pathway tRNA modification; tRNA-queuosine biosynthesis. Its function is as follows. Catalyzes the NADPH-dependent reduction of 7-cyano-7-deazaguanine (preQ0) to 7-aminomethyl-7-deazaguanine (preQ1). The protein is NADPH-dependent 7-cyano-7-deazaguanine reductase of Leptospira interrogans serogroup Icterohaemorrhagiae serovar copenhageni (strain Fiocruz L1-130).